The sequence spans 396 residues: MTHVPQIKIPATYIRGGTSKGVFFRLQDLPETAQVPGPARDALLMRVIGSPDPYGKQIDGMGAATSSTSKTVILSKSTRPDHDVDYLFGQVSIDQPFVDWSGNCGNLSAAVGPFAISAGLVDASRIPHNGVAVVRIWQANIGKTIIGHVPVTNGEVQETGDFELDGVTFPAAEVQLEFMDPAAEEEGAGGAMFPTGNVVDDLEVPAVGTLKATMINAGIPTIFVNAESIGYTGTELQDAINSDTRALAMFEDHPCYGALRMGLIKNVDEAAKRQHTPKVAFVRQAGDYVASSGKKVAAADVDLLVRALSMGKLHHAMMGTAAVAIGTAAAIPGTLVNLAAGGGERNAVRFGHPSGTLRVGAEAQQVDGEWAVKKAIMSRSARVLMEGWVRVPGDAF.

Residues Ser-19 and 66–70 (SSTSK) contribute to the substrate site. Cys-104 functions as the Proton donor/acceptor in the catalytic mechanism. The residue at position 104 (Cys-104) is a Cysteine sulfinic acid (-SO2H). Asn-106, Lys-278, Ser-309, and His-314 together coordinate substrate. Met-318 functions as the Proton donor/acceptor in the catalytic mechanism. Residue Gly-319 coordinates substrate.

Belongs to the PrpF family. Homodimer.

The catalysed reaction is 2-methyl-trans-aconitate = 2-methyl-cis-aconitate. The protein operates within organic acid metabolism; propanoate degradation. Its function is as follows. Catalyzes the isomerization of 2-methyl-trans-aconitate to yield 2-methyl-cis-aconitate through a base-catalyzed proton abstraction coupled with a rotation about C2-C3 bond of 2-methyl-aconitate. The chain is 2-methyl-aconitate isomerase from Cupriavidus necator (Alcaligenes eutrophus).